Consider the following 232-residue polypeptide: MSLFNTVRNTIVPVHKEGYPFVAAFFVASLVLGWIFKPLFWIGMIFTLWCAYFFRDPERVTPQDDDLVISPADGKVSAIQMVTPPAELNLGSEPMLRISVFMNVFNCHVNRAPMHGRIVSINYRSGSFVNAELDKASEDNERNGLVIETGHGQIGVVQIAGLVARRILCWANPNEPVDAGERFGLIRFGSRLDVFLPAGAAPRVSLGQTAVAGETVIAEFASAKGPVISRRS.

The Schiff-base intermediate with substrate; via pyruvic acid role is filled by Ser190. A Pyruvic acid (Ser); by autocatalysis modification is found at Ser190.

It belongs to the phosphatidylserine decarboxylase family. PSD-A subfamily. Heterodimer of a large membrane-associated beta subunit and a small pyruvoyl-containing alpha subunit. The cofactor is pyruvate. In terms of processing, is synthesized initially as an inactive proenzyme. Formation of the active enzyme involves a self-maturation process in which the active site pyruvoyl group is generated from an internal serine residue via an autocatalytic post-translational modification. Two non-identical subunits are generated from the proenzyme in this reaction, and the pyruvate is formed at the N-terminus of the alpha chain, which is derived from the carboxyl end of the proenzyme. The post-translation cleavage follows an unusual pathway, termed non-hydrolytic serinolysis, in which the side chain hydroxyl group of the serine supplies its oxygen atom to form the C-terminus of the beta chain, while the remainder of the serine residue undergoes an oxidative deamination to produce ammonia and the pyruvoyl prosthetic group on the alpha chain.

It is found in the cell membrane. It catalyses the reaction a 1,2-diacyl-sn-glycero-3-phospho-L-serine + H(+) = a 1,2-diacyl-sn-glycero-3-phosphoethanolamine + CO2. It participates in phospholipid metabolism; phosphatidylethanolamine biosynthesis; phosphatidylethanolamine from CDP-diacylglycerol: step 2/2. In terms of biological role, catalyzes the formation of phosphatidylethanolamine (PtdEtn) from phosphatidylserine (PtdSer). The sequence is that of Phosphatidylserine decarboxylase proenzyme from Rhizobium johnstonii (strain DSM 114642 / LMG 32736 / 3841) (Rhizobium leguminosarum bv. viciae).